The chain runs to 150 residues: Cytochrome c oxidase subunit 5A, mitochondrial (150 aa).

A mitochondrion-targeting transit peptide spans 1–41 (MLGAALRRCAVAATTWAGPRGLLHSSRTPGPAAAIQSVRCY). Residues 2–17 (LGAALRRCAVAATTWA) carry the SIFI-degron motif. Lys-87 and Lys-113 each carry N6-acetyllysine. Phosphothreonine is present on Thr-141.

The protein belongs to the cytochrome c oxidase subunit 5A family. Component of the cytochrome c oxidase (complex IV, CIV), a multisubunit enzyme composed of 14 subunits. The complex is composed of a catalytic core of 3 subunits MT-CO1, MT-CO2 and MT-CO3, encoded in the mitochondrial DNA, and 11 supernumerary subunits COX4I, COX5A, COX5B, COX6A, COX6B, COX6C, COX7A, COX7B, COX7C, COX8 and NDUFA4, which are encoded in the nuclear genome. The complex exists as a monomer or a dimer and forms supercomplexes (SCs) in the inner mitochondrial membrane with NADH-ubiquinone oxidoreductase (complex I, CI) and ubiquinol-cytochrome c oxidoreductase (cytochrome b-c1 complex, complex III, CIII), resulting in different assemblies (supercomplex SCI(1)III(2)IV(1) and megacomplex MCI(2)III(2)IV(2)). Interacts with AFG1L. Interacts with RAB5IF. In response to mitochondrial stress, the precursor protein is ubiquitinated by the SIFI complex in the cytoplasm before mitochondrial import, leading to its degradation. Within the SIFI complex, UBR4 initiates ubiquitin chain that are further elongated or branched by KCMF1.

It is found in the mitochondrion inner membrane. Its pathway is energy metabolism; oxidative phosphorylation. In terms of biological role, component of the cytochrome c oxidase, the last enzyme in the mitochondrial electron transport chain which drives oxidative phosphorylation. The respiratory chain contains 3 multisubunit complexes succinate dehydrogenase (complex II, CII), ubiquinol-cytochrome c oxidoreductase (cytochrome b-c1 complex, complex III, CIII) and cytochrome c oxidase (complex IV, CIV), that cooperate to transfer electrons derived from NADH and succinate to molecular oxygen, creating an electrochemical gradient over the inner membrane that drives transmembrane transport and the ATP synthase. Cytochrome c oxidase is the component of the respiratory chain that catalyzes the reduction of oxygen to water. Electrons originating from reduced cytochrome c in the intermembrane space (IMS) are transferred via the dinuclear copper A center (CU(A)) of subunit 2 and heme A of subunit 1 to the active site in subunit 1, a binuclear center (BNC) formed by heme A3 and copper B (CU(B)). The BNC reduces molecular oxygen to 2 water molecules using 4 electrons from cytochrome c in the IMS and 4 protons from the mitochondrial matrix. This is Cytochrome c oxidase subunit 5A, mitochondrial (COX5A) from Colobus guereza (Mantled guereza).